Here is a 245-residue protein sequence, read N- to C-terminus: UDP-2,3-diacylglucosamine hydrolase (245 aa).

Residues D8, H10, D41, N80, and H115 each contribute to the Mn(2+) site. Residue 80–81 (NR) coordinates substrate. Positions 123, 161, 165, 168, and 196 each coordinate substrate. Mn(2+) is bound by residues H196 and H198.

This sequence belongs to the LpxH family. Mn(2+) is required as a cofactor.

It localises to the cell inner membrane. The catalysed reaction is UDP-2-N,3-O-bis[(3R)-3-hydroxytetradecanoyl]-alpha-D-glucosamine + H2O = 2-N,3-O-bis[(3R)-3-hydroxytetradecanoyl]-alpha-D-glucosaminyl 1-phosphate + UMP + 2 H(+). It functions in the pathway glycolipid biosynthesis; lipid IV(A) biosynthesis; lipid IV(A) from (3R)-3-hydroxytetradecanoyl-[acyl-carrier-protein] and UDP-N-acetyl-alpha-D-glucosamine: step 4/6. Functionally, hydrolyzes the pyrophosphate bond of UDP-2,3-diacylglucosamine to yield 2,3-diacylglucosamine 1-phosphate (lipid X) and UMP by catalyzing the attack of water at the alpha-P atom. Involved in the biosynthesis of lipid A, a phosphorylated glycolipid that anchors the lipopolysaccharide to the outer membrane of the cell. This Psychromonas ingrahamii (strain DSM 17664 / CCUG 51855 / 37) protein is UDP-2,3-diacylglucosamine hydrolase.